The chain runs to 445 residues: ATP synthase subunit b-delta (445 aa).

The interval 1-168 (MSIFIGQLIG…PSSAVLEAGA (168 aa)) is ATP synthase subunit b. A helical transmembrane segment spans residues 3-23 (IFIGQLIGFAVIVFILVKWVV). Positions 169–445 (SLNLRAASRE…LAAARTGLPD (277 aa)) are ATP synthase subunit delta.

In the N-terminal section; belongs to the ATPase B chain family. This sequence in the C-terminal section; belongs to the ATPase delta chain family. F-type ATPases have 2 components, F(1) - the catalytic core - and F(0) - the membrane proton channel. F(1) has five subunits: alpha(3), beta(3), gamma(1), delta(1), epsilon(1). F(0) has three main subunits: a(1), b(2) and c(10-14). The alpha and beta chains form an alternating ring which encloses part of the gamma chain. F(1) is attached to F(0) by a central stalk formed by the gamma and epsilon chains, while a peripheral stalk is formed by the delta and b chains.

It is found in the cell membrane. Its function is as follows. F(1)F(0) ATP synthase produces ATP from ADP in the presence of a proton or sodium gradient. F-type ATPases consist of two structural domains, F(1) containing the extramembraneous catalytic core and F(0) containing the membrane proton channel, linked together by a central stalk and a peripheral stalk. During catalysis, ATP synthesis in the catalytic domain of F(1) is coupled via a rotary mechanism of the central stalk subunits to proton translocation. Functionally, this fusion protein includes a component of the F(0) channel (subunit b) and of the F(1) subunit (subunit delta). Two copies of subunit b and one of delta together form the peripheral 'stator' stalk which links F(1) to F(0). In Mycolicibacterium vanbaalenii (strain DSM 7251 / JCM 13017 / BCRC 16820 / KCTC 9966 / NRRL B-24157 / PYR-1) (Mycobacterium vanbaalenii), this protein is ATP synthase subunit b-delta (atpFH).